We begin with the raw amino-acid sequence, 154 residues long: Large ribosomal subunit protein uL30 (154 aa).

Belongs to the universal ribosomal protein uL30 family. Part of the 50S ribosomal subunit.

This is Large ribosomal subunit protein uL30 from Methanoregula boonei (strain DSM 21154 / JCM 14090 / 6A8).